The sequence spans 307 residues: MARTEGDSWDLANSVGATATMVAAARAAATRRSRPIIADPFAEPLVRAVGLDLFTRAASGEVDLDEVAAGLGFARMVDTFAARALFFDKFFADAIAAGLRQVVIVASGLDARPYRLPWPTGMRVYEIDQPEVIEFKTTTLARLGASPTADHHPVGIDLRDDWPSALRAAGFDAARPTAWLAEGVLIGFLPPEAETRLLDNVIELSAVGSRLAADYGTINGSSAESQQLAQQMTEGWRAHGLDMDIAGLTYPGEHTDVAAYLRSHGWETATADHGDVVLAAGLAELTAADRQSPASTIGFVTAVRSTD.

S-adenosyl-L-methionine contacts are provided by residues D128 and 157 to 158; that span reads DL.

It belongs to the UPF0677 family.

Its function is as follows. Exhibits S-adenosyl-L-methionine-dependent methyltransferase activity. The polypeptide is Putative S-adenosyl-L-methionine-dependent methyltransferase MMAR_4570 (Mycobacterium marinum (strain ATCC BAA-535 / M)).